The following is a 75-amino-acid chain: MARYFRRRKFCRFTSEGVVEIDYKDIVTLKNYITESGKIVPSRITGTSARYQRQLARAIKRARYLSLLPYTDLHQ.

The protein belongs to the bacterial ribosomal protein bS18 family. In terms of assembly, part of the 30S ribosomal subunit. Forms a tight heterodimer with protein bS6.

In terms of biological role, binds as a heterodimer with protein bS6 to the central domain of the 16S rRNA, where it helps stabilize the platform of the 30S subunit. This Shewanella frigidimarina (strain NCIMB 400) protein is Small ribosomal subunit protein bS18.